Here is a 121-residue protein sequence, read N- to C-terminus: NADH-quinone oxidoreductase subunit A 1 (121 aa).

Transmembrane regions (helical) follow at residues 11 to 31 (IAIF…APFA), 65 to 85 (LVSI…PWAV), and 90 to 110 (MGWF…VGFI).

The protein belongs to the complex I subunit 3 family. As to quaternary structure, NDH-1 is composed of 14 different subunits. Subunits NuoA, H, J, K, L, M, N constitute the membrane sector of the complex.

The protein resides in the cell inner membrane. It carries out the reaction a quinone + NADH + 5 H(+)(in) = a quinol + NAD(+) + 4 H(+)(out). NDH-1 shuttles electrons from NADH, via FMN and iron-sulfur (Fe-S) centers, to quinones in the respiratory chain. The immediate electron acceptor for the enzyme in this species is believed to be ubiquinone. Couples the redox reaction to proton translocation (for every two electrons transferred, four hydrogen ions are translocated across the cytoplasmic membrane), and thus conserves the redox energy in a proton gradient. In Rhizobium meliloti (strain 1021) (Ensifer meliloti), this protein is NADH-quinone oxidoreductase subunit A 1.